A 1357-amino-acid polypeptide reads, in one-letter code: DNA-directed RNA polymerase subunit beta (1357 aa).

This sequence belongs to the RNA polymerase beta chain family. The RNAP catalytic core consists of 2 alpha, 1 beta, 1 beta' and 1 omega subunit. When a sigma factor is associated with the core the holoenzyme is formed, which can initiate transcription.

It catalyses the reaction RNA(n) + a ribonucleoside 5'-triphosphate = RNA(n+1) + diphosphate. Functionally, DNA-dependent RNA polymerase catalyzes the transcription of DNA into RNA using the four ribonucleoside triphosphates as substrates. The polypeptide is DNA-directed RNA polymerase subunit beta (Pseudomonas entomophila (strain L48)).